A 128-amino-acid chain; its full sequence is Glycine cleavage system H protein (128 aa).

The region spanning 24–106 (SVTVGITAHA…YGDGWFFKIK (83 aa)) is the Lipoyl-binding domain. K65 is modified (N6-lipoyllysine).

It belongs to the GcvH family. In terms of assembly, the glycine cleavage system is composed of four proteins: P, T, L and H. (R)-lipoate is required as a cofactor.

Its function is as follows. The glycine cleavage system catalyzes the degradation of glycine. The H protein shuttles the methylamine group of glycine from the P protein to the T protein. The polypeptide is Glycine cleavage system H protein (Chromobacterium violaceum (strain ATCC 12472 / DSM 30191 / JCM 1249 / CCUG 213 / NBRC 12614 / NCIMB 9131 / NCTC 9757 / MK)).